Here is a 104-residue protein sequence, read N- to C-terminus: L-rhamnose mutarotase (104 aa).

Position 18 (Y18) interacts with substrate. The Proton donor role is filled by H22. Residues Y41 and 76–77 contribute to the substrate site; that span reads WW.

The protein belongs to the rhamnose mutarotase family. As to quaternary structure, homodimer.

The protein localises to the cytoplasm. It carries out the reaction alpha-L-rhamnose = beta-L-rhamnose. The protein operates within carbohydrate metabolism; L-rhamnose metabolism. Functionally, involved in the anomeric conversion of L-rhamnose. The sequence is that of L-rhamnose mutarotase from Burkholderia orbicola (strain MC0-3).